The following is a 246-amino-acid chain: Envelope glycoprotein gp95 (246 aa).

Residues 1–192 (IPSRPVGGPC…EWAVHLLKGL (192 aa)) are Extracellular-facing. A glycan (N-linked (GlcNAc...) asparagine; by host) is linked at N31. A disulfide bridge links C50 with C86. The segment at 58–78 (GPTARIFASILAPGVAAAQAL) is fusion peptide. Residues 75–125 (AQALKEIERLACWSVKQANLTTSLLGDLLDDVTSIRHAVLQNRAAIDFLLL) are a coiled coil. N93 carries an N-linked (GlcNAc...) asparagine; by host glycan. Residues 114 to 130 (LQNRAAIDFLLLAHGHG) are immunosuppression. C131 and C138 form a disulfide bridge. A glycan (N-linked (GlcNAc...) asparagine; by host) is linked at N141. The stretch at 143 to 173 (SDHSESIQKKFQLMKEHVNKIGVDSDPIGSW) forms a coiled coil. The chain crosses the membrane as a helical span at residues 193-213 (LLGLVVILLLVVCLPCLLQIV). Residues C205 and C208 are each lipidated (S-palmitoyl cysteine; by host). At 214-246 (CGNIRKMINNSISYHTEYKKLQKAYGQPESRIV) the chain is on the cytoplasmic side.

Belongs to the Alpharetroviruses envelope glycoprotein family. As to quaternary structure, heterodimer with the transmembrane protein. The mature envelope protein (Env) consists of a trimer of SU-TM heterodimers attached by a labile interchain disulfide bond. Heterodimer with the surface protein. The mature envelope protein (Env) consists of a trimer of SU-TM heterodimers attached by a labile interchain disulfide bond. Specific enzymatic cleavages in vivo yield mature proteins. Envelope glycoproteins are synthesized as an inactive precursor that is N-glycosylated and processed likely by host cell furin or by a furin-like protease in the Golgi to yield the mature SU and TM proteins. The cleavage site between SU and TM requires the minimal sequence [KR]-X-[KR]-R. In terms of processing, the transmembrane protein is palmitoylated. Palmitoylation is necessary for glycoprotein function and infectivity.

The protein resides in the virion membrane. Its subcellular location is the host cell membrane. In terms of biological role, the surface protein (SU) attaches the virus to the host cell by binding to its receptor. This interaction triggers the refolding of the transmembrane protein (TM) thereby unmasking its fusion peptide and the formation of a reactive thiolate to activate its fusogenic potential. Fusion occurs at the host cell plasma membrane. Functionally, the transmembrane protein (TM) acts as a class I viral fusion protein. Under the current model, the protein has at least 3 conformational states: pre-fusion native state, pre-hairpin intermediate state, and post-fusion hairpin state. During viral and target cell membrane fusion, the coiled coil regions (heptad repeats) assume a trimer-of-hairpins structure, positioning the fusion peptide in close proximity to the C-terminal region of the ectodomain. The formation of this structure appears to drive apposition and subsequent fusion of viral and target cell membranes. Membranes fusion leads to delivery of the nucleocapsid into the cytoplasm. This Galliformes protein is Envelope glycoprotein gp95 (env).